A 1016-amino-acid polypeptide reads, in one-letter code: C2 domain-containing protein 5 (1016 aa).

One can recognise a C2 domain in the interval 1–109 (MPGKLKVKIV…EAATVISGWF (109 aa)). Positions 19, 26, 76, 78, 81, and 84 each coordinate Ca(2+). A Phosphoserine; by PKB/AKT2 modification is found at serine 197. Residues serine 200 and serine 260 each carry the phosphoserine modification. Positions 265 to 330 (LKEIPFNEDP…SGSAGKEGGP (66 aa)) are disordered. Residues 274–289 (PNPNTHSSGPSTPLKN) show a composition bias toward polar residues. A compositionally biased stretch (low complexity) spans 290–318 (QTYSFSPSKSYSRQSSSSDTDLSLTPKTG). 5 positions are modified to phosphoserine: serine 293, serine 295, serine 304, serine 305, and serine 306. The residue at position 317 (threonine 317) is a Phosphothreonine. Residues 319–328 (MGSGSAGKEG) show a composition bias toward gly residues. Residue serine 323 is modified to Phosphoserine. Threonine 601 is modified (phosphothreonine). Residues 636-668 (VSEEMIGSPIPEPRQRSRLLRSQSESSDEVTEL) form a disordered region. Phosphoserine is present on residues serine 643, serine 657, serine 659, serine 661, and serine 662. The residue at position 666 (threonine 666) is a Phosphothreonine. 3 positions are modified to phosphoserine: serine 671, serine 817, and serine 869.

Ca(2+) serves as cofactor. Post-translationally, phosphorylated on Ser-197 by active myristoylated kinase AKT2; insulin-stimulated phosphorylation by AKT2 regulates SLC2A4/GLUT4 translocation into the plasma membrane. Expressed in liver, muscle and fat.

It is found in the cytoplasmic vesicle membrane. It localises to the cytoplasm. The protein resides in the cell cortex. The protein localises to the cell membrane. Its subcellular location is the cell projection. It is found in the ruffle. In terms of biological role, required for insulin-stimulated glucose transport and glucose transporter SLC2A4/GLUT4 translocation from intracellular glucose storage vesicle (GSV) to the plasma membrane (PM) in adipocytes. Binds phospholipid membranes in a calcium-dependent manner and is necessary for the optimal membrane fusion between SLC2A4/GLUT4 GSV and the PM. This is C2 domain-containing protein 5 (C2cd5) from Mus musculus (Mouse).